Here is a 99-residue protein sequence, read N- to C-terminus: NADH-quinone oxidoreductase subunit K (99 aa).

Helical transmembrane passes span 3–23, 28–48, and 62–82; these read PMYYLYLSAVLFTLGAVGVLL, IIVFMCVELMLNAANLALVTF, and FFVMVVAAAEVVVGLAIIVAI.

It belongs to the complex I subunit 4L family. NDH-1 is composed of 14 different subunits. Subunits NuoA, H, J, K, L, M, N constitute the membrane sector of the complex.

The protein resides in the cell membrane. It catalyses the reaction a quinone + NADH + 5 H(+)(in) = a quinol + NAD(+) + 4 H(+)(out). Functionally, NDH-1 shuttles electrons from NADH, via FMN and iron-sulfur (Fe-S) centers, to quinones in the respiratory chain. The immediate electron acceptor for the enzyme in this species is believed to be a menaquinone. Couples the redox reaction to proton translocation (for every two electrons transferred, four hydrogen ions are translocated across the cytoplasmic membrane), and thus conserves the redox energy in a proton gradient. The protein is NADH-quinone oxidoreductase subunit K of Acidothermus cellulolyticus (strain ATCC 43068 / DSM 8971 / 11B).